The chain runs to 455 residues: Exodeoxyribonuclease 7 large subunit (455 aa).

It belongs to the XseA family. As to quaternary structure, heterooligomer composed of large and small subunits.

It localises to the cytoplasm. The enzyme catalyses Exonucleolytic cleavage in either 5'- to 3'- or 3'- to 5'-direction to yield nucleoside 5'-phosphates.. In terms of biological role, bidirectionally degrades single-stranded DNA into large acid-insoluble oligonucleotides, which are then degraded further into small acid-soluble oligonucleotides. This is Exodeoxyribonuclease 7 large subunit from Oceanobacillus iheyensis (strain DSM 14371 / CIP 107618 / JCM 11309 / KCTC 3954 / HTE831).